A 156-amino-acid polypeptide reads, in one-letter code: Lipoprotein signal peptidase (156 aa).

3 helical membrane passes run 5–25, 64–84, and 89–109; these read FKFI…DQWV, YLHL…KTLL, and IAFG…FIYG. Residues aspartate 113 and aspartate 130 contribute to the active site. Residues 122–142 traverse the membrane as a helical segment; it reads NFAIFNVADVMINISVALILI.

It belongs to the peptidase A8 family.

It localises to the cell inner membrane. It catalyses the reaction Release of signal peptides from bacterial membrane prolipoproteins. Hydrolyzes -Xaa-Yaa-Zaa-|-(S,diacylglyceryl)Cys-, in which Xaa is hydrophobic (preferably Leu), and Yaa (Ala or Ser) and Zaa (Gly or Ala) have small, neutral side chains.. The protein operates within protein modification; lipoprotein biosynthesis (signal peptide cleavage). Functionally, this protein specifically catalyzes the removal of signal peptides from prolipoproteins. The protein is Lipoprotein signal peptidase of Campylobacter jejuni subsp. doylei (strain ATCC BAA-1458 / RM4099 / 269.97).